The chain runs to 160 residues: Cell cycle regulator of non-homologous end joining (160 aa).

An N-acetylmethionine modification is found at Met-1. Residues 1–21 (METLKSDNKKRVLPSWMTAPG) carry the KBM motif. The tract at residues 78–152 (KPWEQPSLVA…EGKEEEDELK (75 aa)) is disordered. Over residues 99–109 (ESPHTSSPGSS) the composition is skewed to low complexity. The XLM signature appears at 150-160 (ELKYVREIFFS).

In terms of assembly, interacts (via KBM motif) with XRCC5/Ku80 and XRCC6/Ku70 heterodimer. Interacts (via XLF motif) with TRIM28/KAP1, ATM, MRE11, NBN and RAD50. Interacts with splicing factor SF3B1. Interacts with ERCC6L2; this interaction is DNA independent.

The protein localises to the cytoplasm. Its subcellular location is the nucleus. It localises to the chromosome. Cell-cycle-specific regulator of classical non-homologous end joining (NHEJ) of DNA double-strand break (DSB) repair, which can act both as an activator or inhibitor of NHEJ, depending on the cell cycle phase. Acts as a regulator of DNA repair pathway choice by specifically inhibiting classical NHEJ during the S and G2 phases, thereby promoting error-free repair by homologous recombination during cell cycle phases when sister chromatids are present. Preferentially protects single-stranded overhangs at break sites by inhibiting classical NHEJ, thereby creating a local environment that favors homologous recombination. Acts via interaction with XRCC5/Ku80 and XRCC6/Ku70. In contrast, acts as an activator of NHEJ during G1 phase of the cell cycle: promotes classical NHEJ in G1 phase cells via multivalent interactions that increase the affinity of DNA damage response proteins for DSB-associated chromatin. Also involved in immunoglobulin V(D)J recombination. May also act as an indirect regulator of proteasome. This is Cell cycle regulator of non-homologous end joining from Rattus norvegicus (Rat).